Reading from the N-terminus, the 473-residue chain is Azaphilone pigments biosynthesis cluster protein L (473 aa).

The first 23 residues, 1–23 (MAELSIASGIVGLLSLGIQVTQS), serve as a signal peptide directing secretion. ANK repeat units lie at residues 403–432 (EYGN…DVNA) and 436–465 (RYGN…NVST). An N-linked (GlcNAc...) asparagine glycan is attached at asparagine 462.

Part of the gene cluster that mediates the biosynthesis of azaphilone pigments (MonAzPs), a complex mixture of compounds with a common azaphilone skeleton very widely used as food colorants. Seems not to play a direct role in the biosynthesis but might have a regulatorx function. This chain is Azaphilone pigments biosynthesis cluster protein L, found in Monascus ruber (Mold).